Here is a 129-residue protein sequence, read N- to C-terminus: Protachykinin-1 (129 aa).

Positions 1–19 are cleaved as a signal peptide; the sequence is MKILVALAVFFLVSTQLFA. The propeptide occupies 20–56; the sequence is EEIGANDDLNYWSDWYDSDQIKEELPEPFEHLLQRIA. Methionine amide occurs at positions 68 and 107.

It belongs to the tachykinin family. The substance P form is cleaved at Pro-59 by the prolyl endopeptidase FAP (seprase) activity (in vitro). Substance P is also cleaved and degraded by Angiotensin-converting enzyme (ACE) and neprilysin (MME).

It localises to the secreted. Functionally, tachykinins are active peptides which excite neurons, evoke behavioral responses, are potent vasodilators and secretagogues, and contract (directly or indirectly) many smooth muscles. The chain is Protachykinin-1 (TAC1) from Homo sapiens (Human).